The sequence spans 398 residues: GATA transcription factor 21 (398 aa).

The disordered stretch occupies residues 20–51; that stretch reads QPFFYPLGSSSSLHHHHHHHHHQVPSNSSSSS. Basic residues predominate over residues 32 to 42; that stretch reads LHHHHHHHHHQ. Positions 109–116 match the Nuclear localization signal motif; sequence PKKETRLK. A disordered region spans residues 122-144; it reads KDHEDQPHPLHQNPTKPDSDSDK. A GATA-type zinc finger spans residues 226–280; it reads NGVIRVCSDCNTTKTPLWRSGPRGPKSLCNACGIRQRKARRAAMAAAAAAGDQEV. The disordered stretch occupies residues 289–353; the sequence is LPLKKKLQNK…KSTTSSNSSI (65 aa). Residues 291-302 show a composition bias toward basic residues; that stretch reads LKKKLQNKKKRS. A compositionally biased stretch (low complexity) spans 343-353; that stretch reads SKSTTSSNSSI.

The protein belongs to the type IV zinc-finger family. Class B subfamily. In terms of assembly, interacts with SNL1. Forms heterodimers with GATA18. In terms of tissue distribution, expressed predominantly in leaves, and barely in stems, flowers and siliques.

The protein localises to the nucleus. Functionally, transcriptional regulator that specifically binds 5'-GATA-3' or 5'-GAT-3' motifs within gene promoters. Involved in the modulation of chloroplast development, growth and division in a cytokinin-dependent manner. Repressor of the gibberellic acid (GA) signaling pathway that represses flowering and modulates greening, in a SOC1-dependent manner. Prevents the accumulation of SOC1 during flowering. Promotes chlorophyll biosynthesis throughout the plant, by regulating chlorophyll biosynthetic genes (e.g. HEMA1 and GUN4) and chloroplast localized glutamate synthase (e.g. GLU1). Involved in the regulation of sugar-sensing genes (e.g. HXK1, HXK2, STP13 and PLT6). Regulator of germination, senescence, elongation growth and flowering time. Also influences leaf starch content. This chain is GATA transcription factor 21, found in Arabidopsis thaliana (Mouse-ear cress).